The chain runs to 285 residues: NADPH-dependent 7-cyano-7-deazaguanine reductase (285 aa).

91–93 contributes to the substrate binding site; it reads IES. 93-94 contributes to the NADPH binding site; that stretch reads SK. The active-site Thioimide intermediate is the cysteine 191. Aspartate 198 serves as the catalytic Proton donor. 230 to 231 lines the substrate pocket; the sequence is HE. 259 to 260 lines the NADPH pocket; the sequence is RG.

This sequence belongs to the GTP cyclohydrolase I family. QueF type 2 subfamily. As to quaternary structure, homodimer.

The protein resides in the cytoplasm. The enzyme catalyses 7-aminomethyl-7-carbaguanine + 2 NADP(+) = 7-cyano-7-deazaguanine + 2 NADPH + 3 H(+). It functions in the pathway tRNA modification; tRNA-queuosine biosynthesis. Functionally, catalyzes the NADPH-dependent reduction of 7-cyano-7-deazaguanine (preQ0) to 7-aminomethyl-7-deazaguanine (preQ1). The protein is NADPH-dependent 7-cyano-7-deazaguanine reductase of Legionella pneumophila (strain Lens).